The following is a 139-amino-acid chain: Large ribosomal subunit protein uL16 (139 aa).

This sequence belongs to the universal ribosomal protein uL16 family. In terms of assembly, part of the 50S ribosomal subunit.

Functionally, binds 23S rRNA and is also seen to make contacts with the A and possibly P site tRNAs. The polypeptide is Large ribosomal subunit protein uL16 (rplP) (Neorickettsia sennetsu (strain ATCC VR-367 / Miyayama) (Ehrlichia sennetsu)).